A 141-amino-acid polypeptide reads, in one-letter code: Cystatin-SN (141 aa).

The N-terminal stretch at 1–20 (MAQYLSTLLLLLATLAVALA) is a signal peptide. The short motif at 76-80 (QTVGG) is the Secondary area of contact element. Cystine bridges form between Cys94-Cys104 and Cys118-Cys138.

Belongs to the cystatin family. In terms of tissue distribution, expressed in submandibular and sublingual saliva but not in parotid saliva (at protein level). Expressed in saliva, tears, urine and seminal fluid.

Its subcellular location is the secreted. Human saliva appears to contain several cysteine proteinase inhibitors that are immunologically related to cystatin S but that differ in their specificity due to amino acid sequence differences. Cystatin SN, with a pI of 7.5, is a much better inhibitor of papain and dipeptidyl peptidase I than is cystatin S, although both inhibit ficin equally well. This Homo sapiens (Human) protein is Cystatin-SN (CST1).